A 143-amino-acid polypeptide reads, in one-letter code: NADH-quinone oxidoreductase subunit A (143 aa).

Helical transmembrane passes span 8-28, 63-83, and 90-110; these read FGNVFAFLALGIVFVAGGYLT, FYVVALIFIIFDVEVVFLYPW, and LGVFALVEVLVFAGILILGLV.

This sequence belongs to the complex I subunit 3 family. As to quaternary structure, NDH-1 is composed of 14 different subunits. Subunits NuoA, H, J, K, L, M, N constitute the membrane sector of the complex.

The protein resides in the cell inner membrane. It catalyses the reaction a quinone + NADH + 5 H(+)(in) = a quinol + NAD(+) + 4 H(+)(out). NDH-1 shuttles electrons from NADH, via FMN and iron-sulfur (Fe-S) centers, to quinones in the respiratory chain. The immediate electron acceptor for the enzyme in this species is believed to be a menaquinone. Couples the redox reaction to proton translocation (for every two electrons transferred, four hydrogen ions are translocated across the cytoplasmic membrane), and thus conserves the redox energy in a proton gradient. The polypeptide is NADH-quinone oxidoreductase subunit A (Chlorobium phaeobacteroides (strain DSM 266 / SMG 266 / 2430)).